The following is a 342-amino-acid chain: D-erythrose-4-phosphate dehydrogenase (342 aa).

R12–I13 provides a ligand contact to NAD(+). Residues S154 to T156, R200, T213 to K214, and R236 each bind substrate. Residue C155 is the Nucleophile of the active site. N318 is an NAD(+) binding site.

Belongs to the glyceraldehyde-3-phosphate dehydrogenase family. Epd subfamily. In terms of assembly, homotetramer.

The protein localises to the cytoplasm. It catalyses the reaction D-erythrose 4-phosphate + NAD(+) + H2O = 4-phospho-D-erythronate + NADH + 2 H(+). It functions in the pathway cofactor biosynthesis; pyridoxine 5'-phosphate biosynthesis; pyridoxine 5'-phosphate from D-erythrose 4-phosphate: step 1/5. Catalyzes the NAD-dependent conversion of D-erythrose 4-phosphate to 4-phosphoerythronate. This Salmonella arizonae (strain ATCC BAA-731 / CDC346-86 / RSK2980) protein is D-erythrose-4-phosphate dehydrogenase.